A 449-amino-acid chain; its full sequence is Gamma conglutin 1 (449 aa).

The first 33 residues, 1-33, serve as a signal peptide directing secretion; it reads MARNMAHILHILVISLSYSFLFVSSSSQDSQSL. The Peptidase A1 domain maps to 60–429; the sequence is HWANIHKRTP…DLERSRVGFN (370 aa). Disulfide bonds link Cys88-Cys178, Cys102-Cys115, Cys107-Cys133, Cys118-Cys128, and Cys350-Cys391. Asn130 is a glycosylation site (N-linked (GlcNAc...) asparagine).

This sequence belongs to the peptidase A1 family. Two-subunit monomeric unit made of alpha and beta subunits coupled by disulfide bonds (at pH 4.5 and under non-reducing conditions). Can also form oligomers including dimer, tetramer and cyclic hexamer (trimer of dimers) (at pH &gt; 5.5). Component of globulins complexes which accumulate in seeds. Interacts with flavonoids (e.g. apigenin glucosides) present in globulins complexes. Forms a static complex with vitexin. Undergoes very complex post-translational maturation; the proteolytic processing leading to the formation of two alpha and beta subunits is incomplete, leaving a certain amount of the protein in an uncut form. Post-translationally, glycosylated on alpha chain. In terms of tissue distribution, expressed in developing cotyledons and in the embryonic axis of germinating seeds. Accumulates in seeds, especially in the protein bodies of developing cotyledonary cells (at protein level). Also detected, at low levels, in plumules and radicles.

The protein resides in the secreted. It localises to the extracellular space. Sulfur-rich seed storage protein that remains undegraded at germination. The sequence is that of Gamma conglutin 1 from Lupinus angustifolius (Narrow-leaved blue lupine).